The sequence spans 223 residues: N-terminal Xaa-Pro-Lys N-methyltransferase 1-B (223 aa).

S-adenosyl-L-methionine is bound by residues Gly69, Arg74, 91–93 (DVT), 119–120 (LQ), and Gln135.

The protein belongs to the methyltransferase superfamily. NTM1 family.

The protein resides in the nucleus. It carries out the reaction N-terminal L-alanyl-L-prolyl-L-lysyl-[protein] + 3 S-adenosyl-L-methionine = N-terminal N,N,N-trimethyl-L-alanyl-L-prolyl-L-lysyl-[protein] + 3 S-adenosyl-L-homocysteine + 3 H(+). It catalyses the reaction N-terminal L-seryl-L-prolyl-L-lysyl-[protein] + 3 S-adenosyl-L-methionine = N-terminal N,N,N-trimethyl-L-seryl-L-prolyl-L-lysyl-[protein] + 3 S-adenosyl-L-homocysteine + 3 H(+). The catalysed reaction is N-terminal L-prolyl-L-prolyl-L-lysyl-[protein] + 2 S-adenosyl-L-methionine = N-terminal N,N-dimethyl-L-prolyl-L-prolyl-L-lysyl-[protein] + 2 S-adenosyl-L-homocysteine + 2 H(+). In terms of biological role, distributive alpha-N-methyltransferase that methylates the N-terminus of target proteins containing the N-terminal motif [Ala/Gly/Pro/Ser]-Pro-Lys when the initiator Met is cleaved. Specifically catalyzes mono-, di- or tri-methylation of the exposed alpha-amino group of the Ala, Gly or Ser residue in the [Ala/Gly/Ser]-Pro-Lys motif and mono- or di-methylation of Pro in the Pro-Pro-Lys motif. Required during mitosis for normal bipolar spindle formation and chromosome segregation via its action on target proteins. In Xenopus laevis (African clawed frog), this protein is N-terminal Xaa-Pro-Lys N-methyltransferase 1-B (ntmt1-b).